The following is a 147-amino-acid chain: Acidic phospholipase A2 1 (147 aa).

A signal peptide spans 1-19 (MNPAHLLVLAAVCVSLLGA). A propeptide spanning residues 20–27 (AIVPPQPL) is cleaved from the precursor. Disulfide bonds link cysteine 38–cysteine 99, cysteine 54–cysteine 146, cysteine 56–cysteine 72, cysteine 71–cysteine 127, cysteine 78–cysteine 120, cysteine 88–cysteine 113, and cysteine 106–cysteine 118. Ca(2+) is bound by residues tyrosine 55, glycine 57, and glycine 59. Histidine 75 is an active-site residue. A Ca(2+)-binding site is contributed by aspartate 76. Residue aspartate 121 is part of the active site.

This sequence belongs to the phospholipase A2 family. Group I subfamily. D49 sub-subfamily. The cofactor is Ca(2+). In terms of tissue distribution, expressed by the venom gland.

The protein localises to the secreted. It catalyses the reaction a 1,2-diacyl-sn-glycero-3-phosphocholine + H2O = a 1-acyl-sn-glycero-3-phosphocholine + a fatty acid + H(+). Its function is as follows. PLA2 catalyzes the calcium-dependent hydrolysis of the 2-acyl groups in 3-sn-phosphoglycerides. The sequence is that of Acidic phospholipase A2 1 from Bungarus flaviceps flaviceps (Red-headed krait).